A 1591-amino-acid polypeptide reads, in one-letter code: Rho guanine nucleotide exchange factor TIAM1 (1591 aa).

Residues 1 to 70 (MGNAESQNVD…TPSIPQSLAE (70 aa)) are disordered. Gly2 carries the N-myristoyl glycine lipid modification. Over residues 8 to 19 (NVDHEFYGEKHA) the composition is skewed to basic and acidic residues. Over residues 20 to 49 (SLGRKHTSRSLRLSHKTRRTRHASSGKAIH) the composition is skewed to basic residues. A compositionally biased stretch (low complexity) spans 53 to 67 (EVSTRSSSTPSIPQS). 3 positions are modified to phosphoserine: Ser231, Ser356, and Ser358. 2 disordered regions span residues 305-380 (QISL…DRAR) and 393-422 (MSTTNSESLEEAGSAHSDEQSSGTLSSPGQ). The segment covering 340-359 (TTDTDLLSRRSNATNSSYSP) has biased composition (polar residues). Low complexity predominate over residues 367 to 376 (GSDSGSSSTG). Positions 412-422 (QSSGTLSSPGQ) are enriched in polar residues. A PH 1 domain is found at 434 to 549 (VRKAGALAVK…TAIHSACAAA (116 aa)). At Ser695 the chain carries Phosphoserine. Positions 765–832 (TPSWFCLPNN…QPEEDIYELL (68 aa)) constitute an RBD domain. Tyr829 bears the Phosphotyrosine; by NTRK2 mark. The PDZ domain maps to 845–908 (NIHIEKSDAA…NNRAAGTLNS (64 aa)). A disordered region spans residues 933–1034 (GVELLENPPH…TSPQLATTRQ (102 aa)). Over residues 958–975 (LTSNPGHSLSSEQGSSAE) the composition is skewed to polar residues. The span at 977–990 (APEEGEGPDLESSD) shows a compositional bias: acidic residues. Over residues 1014–1028 (PSDSSPSPQDATSPQ) the composition is skewed to low complexity. Residues 1040-1234 (KLRKVICELL…NKVASHINEM (195 aa)) form the DH domain. One can recognise a PH 2 domain in the interval 1261-1397 (DLSMGDLLLH…KSVHSILRDK (137 aa)). Residue Tyr1323 is modified to Phosphotyrosine. Glycyl lysine isopeptide (Lys-Gly) (interchain with G-Cter in ubiquitin) cross-links involve residues Lys1404 and Lys1420. Residues 1456–1481 (TIDSDAISASSPEKEPQQPAGGGDTD) are disordered. At Ser1519 the chain carries Phosphoserine.

Belongs to the TIAM family. As to quaternary structure, component of the Par polarity complex, composed of at least phosphorylated PRKCZ, PARD3 and TIAM1. Interacts with BAIAP2. Interacts (via PDZ domain) with CNTNAP4, SDC1 and SDC3 (via C-terminus). Interacts with CD44, PARD3 and MAPK8IP2. Interacts with EPHA8; regulates clathrin-mediated endocytosis of EPHA8. Interacts with NTRK2; mediates the activation of RAC1 by BDNF. Ubiquitinated. Undergoes 'Lys-48' ubiquitination at Lys-1404 and Lys-1420 by a CUL3(KBTBD6/7) E3 ubiquitin ligase complex composed of CUL3, RBX1, KBTBD6 and KBTBD7. 'Lys-48' ubiquitination at Lys-1404 and Lys-1420 triggers proteasomal degradation. Ubiquitination at Lys-1404 and Lys-1420 by CUL3(KBTBD6/7) also requires the membrane-associated protein GABARAP and may therefore be spatially restricted within the cell. As to expression, highly expressed in brain and testis and at low or moderate levels in almost all other normal tissues. Found in virtually all analyzed tumor cell lines including B- and T-lymphomas, neuroblastomas, melanomas and carcinomas.

The protein resides in the cell junction. It localises to the cell membrane. Its function is as follows. Guanyl-nucleotide exchange factor that activates RHO-like proteins and connects extracellular signals to cytoskeletal activities. Activates RAC1, CDC42, and to a lesser extent RHOA and their downstream signaling to regulate processes like cell adhesion and cell migration. This is Rho guanine nucleotide exchange factor TIAM1 from Mus musculus (Mouse).